A 185-amino-acid chain; its full sequence is Large ribosomal subunit protein uL5 (185 aa).

This sequence belongs to the universal ribosomal protein uL5 family. As to quaternary structure, part of the 50S ribosomal subunit; part of the 5S rRNA/L5/L18/L25 subcomplex. Contacts the 5S rRNA and the P site tRNA. Forms a bridge to the 30S subunit in the 70S ribosome.

In terms of biological role, this is one of the proteins that bind and probably mediate the attachment of the 5S RNA into the large ribosomal subunit, where it forms part of the central protuberance. In the 70S ribosome it contacts protein S13 of the 30S subunit (bridge B1b), connecting the 2 subunits; this bridge is implicated in subunit movement. Contacts the P site tRNA; the 5S rRNA and some of its associated proteins might help stabilize positioning of ribosome-bound tRNAs. In Rhizobium leguminosarum bv. trifolii (strain WSM2304), this protein is Large ribosomal subunit protein uL5.